Reading from the N-terminus, the 115-residue chain is Large ribosomal subunit protein bL19 (115 aa).

The protein belongs to the bacterial ribosomal protein bL19 family.

In terms of biological role, this protein is located at the 30S-50S ribosomal subunit interface and may play a role in the structure and function of the aminoacyl-tRNA binding site. This is Large ribosomal subunit protein bL19 from Latilactobacillus sakei subsp. sakei (strain 23K) (Lactobacillus sakei subsp. sakei).